Reading from the N-terminus, the 169-residue chain is Photosystem I assembly protein Ycf3 (169 aa).

3 TPR repeats span residues 35 to 68, 72 to 105, and 120 to 153; these read AFSY…EIDP, SYIL…NPAL, and GEQA…APSN.

This sequence belongs to the Ycf3 family.

It localises to the plastid. It is found in the chloroplast thylakoid membrane. Essential for the assembly of the photosystem I (PSI) complex. May act as a chaperone-like factor to guide the assembly of the PSI subunits. The sequence is that of Photosystem I assembly protein Ycf3 from Chaetosphaeridium globosum (Charophycean green alga).